The chain runs to 428 residues: Putative zinc metalloprotease SACOL1281 (428 aa).

Zn(2+) is bound at residue His21. Residue Glu22 is part of the active site. His25 serves as a coordination point for Zn(2+). 4 helical membrane-spanning segments follow: residues 172-194, 309-331, 352-374, and 401-420; these read FLTL…IGLA, GSTY…GFSF, IISL…LIPI, and TTII…LVTW. Positions 186–269 constitute a PDZ domain; sequence ALVLFIGLAY…TKSVELTPKK (84 aa).

It belongs to the peptidase M50B family. Zn(2+) serves as cofactor.

Its subcellular location is the cell membrane. This chain is Putative zinc metalloprotease SACOL1281, found in Staphylococcus aureus (strain COL).